The sequence spans 286 residues: MTIFAKDKLIAYGQLMRLDKPIGTLLLLWPTLWALYLAEKAMPTLSVLAIFICGVFLMRSAGCVINDYADRHIDGKVKRTSLRPLSTGRATPREAKWLFIVLVFCSFLLVLCLNLYTIGLSVIAVILAFIYPFMKRYTHLPQFFLGAAFGWSIPMAYGATIEALPLECWLLFIANLSWTVAYDTQYAMVDRDDDLRIGVKSTAILFAQYDNKIIALLQIITLIFLFSVGYLSQLNNRYFIVLAIAGLFFVYQCRLTKNRDRASCFNAFLNNNYFGLTVFIAVLFGI.

Helical transmembrane passes span 22–42 (IGTLLLLWPTLWALYLAEKAM), 45–65 (LSVLAIFICGVFLMRSAGCVI), 98–118 (LFIVLVFCSFLLVLCLNLYTI), 143–163 (FFLGAAFGWSIPMAYGATIEA), 213–233 (IIALLQIITLIFLFSVGYLSQ), 238–255 (YFIVLAIAGLFFVYQCRL), and 266–286 (NAFLNNNYFGLTVFIAVLFGI).

It belongs to the UbiA prenyltransferase family. Mg(2+) serves as cofactor.

Its subcellular location is the cell inner membrane. It catalyses the reaction all-trans-octaprenyl diphosphate + 4-hydroxybenzoate = 4-hydroxy-3-(all-trans-octaprenyl)benzoate + diphosphate. It functions in the pathway cofactor biosynthesis; ubiquinone biosynthesis. Functionally, catalyzes the prenylation of para-hydroxybenzoate (PHB) with an all-trans polyprenyl group. Mediates the second step in the final reaction sequence of ubiquinone-8 (UQ-8) biosynthesis, which is the condensation of the polyisoprenoid side chain with PHB, generating the first membrane-bound Q intermediate 3-octaprenyl-4-hydroxybenzoate. This chain is 4-hydroxybenzoate octaprenyltransferase, found in Histophilus somni (strain 129Pt) (Haemophilus somnus).